Here is a 167-residue protein sequence, read N- to C-terminus: CASP-like protein 3 (167 aa).

Over 1–2 (MK) the chain is Cytoplasmic. A helical transmembrane segment spans residues 3–23 (IIAIAPRIGAAVLSLVAFSVM). Residues 24-48 (ASTGERRSGAGSTFKVKFSDFQAYN) are Extracellular-facing. The chain crosses the membrane as a helical span at residues 49–69 (YLIALNVILFVYSTVQLVMLV). Over 70 to 80 (NSNHNSSFSSP) the chain is Cytoplasmic. The helical transmembrane segment at 81–101 (FKWVLGVYICDQLLAFLLFSA) threads the bilayer. Residues 102–137 (SSSAATASELSRHGLHNIWPPACATWKLWTFCSKAE) lie on the Extracellular side of the membrane. Residues 138 to 158 (AAVAMSFLSSFFIITSSILSG) traverse the membrane as a helical segment. Residues 159-167 (YHLSKVPAV) lie on the Cytoplasmic side of the membrane.

It belongs to the Casparian strip membrane proteins (CASP) family. In terms of assembly, homodimer and heterodimers.

It localises to the cell membrane. This chain is CASP-like protein 3, found in Osmunda lancea (Fern).